A 37-amino-acid polypeptide reads, in one-letter code: Potassium channel toxin alpha-KTx 11.1 (37 aa).

3 disulfides stabilise this stretch: Cys-8–Cys-27, Cys-13–Cys-33, and Cys-17–Cys-35.

Belongs to the short scorpion toxin superfamily. Potassium channel inhibitor family. Alpha-KTx 11 subfamily. Expressed by the venom gland.

The protein localises to the secreted. Binds and inhibits voltage-sensitive potassium channels. Inhibits the vertebrate potassium channels Kv1.1/KCNA1, Kv1.2/KCNA2 and Kv1.3/KCNA3 with low affinity. Also weakly inhibits Kv7.1/KCNQ1 (10 uM of the toxin inhibits currents by 21.43%). This is Potassium channel toxin alpha-KTx 11.1 from Parabuthus villosus (Black hairy thick-tailed scorpion).